Reading from the N-terminus, the 248-residue chain is mRNA-decapping protein OPG122 (248 aa).

The Nudix hydrolase domain occupies 45–227; the sequence is HKRVSVSAIL…IAKYALDTAK (183 aa). Positions 126–147 match the Nudix box motif; the sequence is GIPKRGENVPECLSREIKEEVN. Glu-132 provides a ligand contact to Mg(2+). Glu-141 serves as the catalytic Nucleophile. Glu-145 contacts Mn(2+). Position 167 (Asp-167) interacts with Mg(2+).

This sequence belongs to the Nudix hydrolase family. Mg(2+) serves as cofactor. Mn(2+) is required as a cofactor.

It localises to the host mitochondrion. Decapping enzyme that remove the protective 5'-cap from both host and viral mRNAs to commit transcripts for decay by the cellular exonuclease XRN1. Preferentially targets spliced mRNAs and since all viral genes are intronless, it preferentially targets host over viral transcripts. Acceleration of the turnover of cellular transcripts promotes the shutoff of host protein synthesis and therefore diminish the magnitude of antiviral response. This chain is mRNA-decapping protein OPG122 (OPG122), found in Bos taurus (Bovine).